Consider the following 139-residue polypeptide: GATA transcription factor 16 (139 aa).

The segment at 32-86 (NDKKKTCADCGTSKTPLWRGGPVGPKSLCNACGIRNRKKRRGGTEDNKKLKKSSS) adopts a GATA-type zinc-finger fold. A disordered region spans residues 67–98 (NRKKRRGGTEDNKKLKKSSSGGGNRKFGESLK).

This sequence belongs to the type IV zinc-finger family. Class B subfamily.

The protein resides in the nucleus. Transcriptional regulator that specifically binds 5'-GATA-3' or 5'-GAT-3' motifs within gene promoters. This is GATA transcription factor 16 (GATA16) from Arabidopsis thaliana (Mouse-ear cress).